A 1886-amino-acid chain; its full sequence is Nuclear pore membrane glycoprotein 210 (1886 aa).

The N-terminal stretch at 1 to 26 is a signal peptide; that stretch reads MARASLVQPALWALLLLQVVGPAAAA. Topologically, residues 27-1808 are perinuclear space; it reads KLNIPKVLLP…LLSHFLDSYQ (1782 aa). Residues Asn44, Asn337, Asn405, Asn484, Asn681, Asn801, Asn926, Asn1039, Asn1116, Asn1135, Asn1362, and Asn1441 are each glycosylated (N-linked (GlcNAc...) asparagine). Residues 1078–1151 form the BIG2 domain; that stretch reads FPPFRLIPRK…VQAVDAETGK (74 aa). A helical membrane pass occupies residues 1809-1829; the sequence is VMFFTFFALLAGTAVTIIAYH. The Cytoplasmic portion of the chain corresponds to 1830 to 1886; that stretch reads TVCAPRELASPLALTPRASPQHSPHYLASSPAAFNTLPSGRKASPPSGLWSPAYASH. The residue at position 1839 (Ser1839) is a Phosphoserine. Thr1844 bears the Phosphothreonine mark. 4 positions are modified to phosphoserine: Ser1873, Ser1876, Ser1880, and Ser1885.

It belongs to the NUP210 family. As to quaternary structure, forms dimers and possibly higher-order oligomers. Post-translationally, N-glycosylated, but not all potential glycosylation sites may be used. Contains high-mannose type oligosaccharides. Phosphorylated at Ser-1880 in mitosis specifically; not phosphorylated in interphase.

Its subcellular location is the nucleus. The protein resides in the nuclear pore complex. It localises to the nucleus membrane. It is found in the endoplasmic reticulum membrane. In terms of biological role, nucleoporin essential for nuclear pore assembly and fusion, nuclear pore spacing, as well as structural integrity. This is Nuclear pore membrane glycoprotein 210 (Nup210) from Mus musculus (Mouse).